The primary structure comprises 545 residues: E3 ubiquitin-protein ligase ipaH9.8 (545 aa).

An interaction with target proteins region spans residues 1–242; that stretch reads MLPINNNFSL…YHGPRIYFSM (242 aa). LRR repeat units follow at residues 57–77, 78–99, 100–117, 118–139, 140–157, 158–179, 182–203, and 205–228; these read NSDE…NLPA, QITL…PVTL, KKLY…VLPP, ALES…PDSL, LTMN…SLPQ, ALKN…SEGN, VVRE…ILNL, and NECS…QRLT. The tract at residues 243–250 is linker; that stretch reads SDGQQNTL. Residues 251 to 545 form an E3 ubiquitin-protein ligase catalytic domain region; the sequence is HRPLADAVTA…PENGSQLHHS (295 aa). Residues 253-545 enclose the NEL domain; that stretch reads PLADAVTAWF…PENGSQLHHS (293 aa). Catalysis depends on cysteine 337, which acts as the Glycyl thioester intermediate.

It belongs to the LRR-containing bacterial E3 ligase family. Also interacts with human and mouse U2AF1 (U2AF35). Autoubiquitinated (in vitro). Ubiquitinated in the presence of host E1 ubiquitin-activating enzyme, E2 ubiquitin-conjugating enzyme and ubiquitin.

It is found in the secreted. The protein localises to the host cytoplasm. It localises to the host nucleus. It catalyses the reaction S-ubiquitinyl-[E2 ubiquitin-conjugating enzyme]-L-cysteine + [acceptor protein]-L-lysine = [E2 ubiquitin-conjugating enzyme]-L-cysteine + N(6)-ubiquitinyl-[acceptor protein]-L-lysine.. The protein operates within protein modification; protein ubiquitination. Its activity is regulated as follows. Exists in an autoinhibited state in the absence of substrate protein, due to interactions of the leucine-rich repeats with NEL domain. Is activated upon binding to a substrate protein. Effector E3 ubiquitin ligase that interferes with host's ubiquitination pathway and modulates the acute inflammatory responses, thus facilitating bacterial colonization within the host cell. Interacts with IKBKG (NEMO) and TNIP1 (ABIN-1), a ubiquitin-binding adapter protein, which results in TNIP1-dependent 'Lys-27'-linked polyubiquitination of IKBKG. Consequently, polyubiquitinated IKBKG undergoes proteasome-dependent degradation, which perturbs NF-kappa-B activation during bacterial infection. Mediates polyubiquitination of host U2AF1, leading to its proteasomal degradation. Catalyzes 'Lys-48'-linked polyubiquitination and subsequent degradation of a subset of host guanylate-binding proteins (GBP1, GBP2, GBP4 and GBP6), thereby suppressing host cell defense. In contrast, host GBP3 and GBP7 are not ubiquitinated by IpaH9.8. Uses UBE2D2 (UBCH5B) as an E2 ubiquitin-conjugating enzyme. The polypeptide is E3 ubiquitin-protein ligase ipaH9.8 (Shigella flexneri).